A 208-amino-acid chain; its full sequence is Uracil phosphoribosyltransferase (208 aa).

5-phospho-alpha-D-ribose 1-diphosphate is bound by residues Arg-78, Arg-103, and 130 to 138 (DPMLATGGT). Residues Ile-193 and 198-200 (GDA) contribute to the uracil site. Residue Asp-199 participates in 5-phospho-alpha-D-ribose 1-diphosphate binding.

This sequence belongs to the UPRTase family. Mg(2+) serves as cofactor.

The enzyme catalyses UMP + diphosphate = 5-phospho-alpha-D-ribose 1-diphosphate + uracil. It participates in pyrimidine metabolism; UMP biosynthesis via salvage pathway; UMP from uracil: step 1/1. Allosterically activated by GTP. Its function is as follows. Catalyzes the conversion of uracil and 5-phospho-alpha-D-ribose 1-diphosphate (PRPP) to UMP and diphosphate. The protein is Uracil phosphoribosyltransferase of Maridesulfovibrio salexigens (strain ATCC 14822 / DSM 2638 / NCIMB 8403 / VKM B-1763) (Desulfovibrio salexigens).